The sequence spans 315 residues: Protease HtpX homolog (315 aa).

Residues 16–36 (LFMGIGYLIGGASGALIALVV) traverse the membrane as a helical segment. Position 130 (His130) interacts with Zn(2+). The active site involves Glu131. His134 is a binding site for Zn(2+). 2 consecutive transmembrane segments (helical) span residues 145-165 (ITAT…FFGG) and 172-192 (GPGL…AMLV). Zn(2+) is bound at residue Glu201. Positions 282-315 (GGGGASIGRPAGPSPRGAPRSPWSGQPRARGPWG) are disordered. A compositionally biased stretch (low complexity) spans 288–303 (IGRPAGPSPRGAPRSP).

Belongs to the peptidase M48B family. Requires Zn(2+) as cofactor.

The protein localises to the cell inner membrane. The chain is Protease HtpX homolog from Rhodopseudomonas palustris (strain BisB5).